A 457-amino-acid polypeptide reads, in one-letter code: MVQISEVQEQSSTAYTRTAAHTHIKGLGLDEFGVAKQVEGGFVGQAEAREACGVIVDLIKAKKMSGKAILLAGGPSTGKTALALAISQELGPKVPFCPLVGSELYSVEVKKTEALMENFRRAIGLRIKETKEVYEGEVTELTPEEAENPLGGYGKTISHVIVGLKSAKGTKTLRLDPTIYESIQREKVSVGDVIYIESNTGAVKRVGRSDAFATEFDLEAEEYVPLPKGEVHKKKEIVQDVTLHDLDVANARPQGGQDVISMMGQLMKPKKTEITEKLRHEVNKVVAKYIDQGVAELVPGVLFIDEVNMLDIEIFTYLNRALESDIAPVVVLASNRGMITVRGTDDVVSPHGVPPDLIDRLLIVRTLPYNREEIKTIISKRAAVENLQVEDEALEFLATLGTETSLRYVLQLLSPSGIIAKIANRAEISVADVEEAKLLFLDAKRSTKILEQSENYL.

73 to 80 contributes to the ATP binding site; the sequence is GGPSTGKT.

It belongs to the RuvB family. In terms of assembly, may form heterododecamers with RVB2. Component of the SWR1 chromatin remodeling complex, the INO80 chromatin remodeling complex, and of the R2TP complex.

The protein resides in the nucleus. The catalysed reaction is ATP + H2O = ADP + phosphate + H(+). Its function is as follows. DNA helicase which participates in several chromatin remodeling complexes, including the SWR1 and the INO80 complexes. The SWR1 complex mediates the ATP-dependent exchange of histone H2A for the H2A variant HZT1 leading to transcriptional regulation of selected genes by chromatin remodeling. The INO80 complex remodels chromatin by shifting nucleosomes and is involved in DNA repair. Also involved in pre-rRNA processing. This chain is RuvB-like helicase 1 (RVB1), found in Kluyveromyces lactis (strain ATCC 8585 / CBS 2359 / DSM 70799 / NBRC 1267 / NRRL Y-1140 / WM37) (Yeast).